A 311-amino-acid chain; its full sequence is Methionyl-tRNA formyltransferase (311 aa).

Residue Ser-109 to Pro-112 participates in (6S)-5,6,7,8-tetrahydrofolate binding.

The protein belongs to the Fmt family.

The enzyme catalyses L-methionyl-tRNA(fMet) + (6R)-10-formyltetrahydrofolate = N-formyl-L-methionyl-tRNA(fMet) + (6S)-5,6,7,8-tetrahydrofolate + H(+). In terms of biological role, attaches a formyl group to the free amino group of methionyl-tRNA(fMet). The formyl group appears to play a dual role in the initiator identity of N-formylmethionyl-tRNA by promoting its recognition by IF2 and preventing the misappropriation of this tRNA by the elongation apparatus. In Staphylococcus aureus (strain bovine RF122 / ET3-1), this protein is Methionyl-tRNA formyltransferase.